A 305-amino-acid polypeptide reads, in one-letter code: UDP-3-O-acyl-N-acetylglucosamine deacetylase (305 aa).

Zn(2+) contacts are provided by H79, H238, and D242. The Proton donor role is filled by H265.

Belongs to the LpxC family. It depends on Zn(2+) as a cofactor.

It catalyses the reaction a UDP-3-O-[(3R)-3-hydroxyacyl]-N-acetyl-alpha-D-glucosamine + H2O = a UDP-3-O-[(3R)-3-hydroxyacyl]-alpha-D-glucosamine + acetate. Its pathway is glycolipid biosynthesis; lipid IV(A) biosynthesis; lipid IV(A) from (3R)-3-hydroxytetradecanoyl-[acyl-carrier-protein] and UDP-N-acetyl-alpha-D-glucosamine: step 2/6. Functionally, catalyzes the hydrolysis of UDP-3-O-myristoyl-N-acetylglucosamine to form UDP-3-O-myristoylglucosamine and acetate, the committed step in lipid A biosynthesis. The protein is UDP-3-O-acyl-N-acetylglucosamine deacetylase of Klebsiella pneumoniae (strain 342).